The primary structure comprises 277 residues: Inner kinetochore subunit sim4 (277 aa).

Positions asparagine 96–glutamate 138 form a coiled coil.

It belongs to the CENP-K/MCM22 family. Component of the inner kinetochore constitutive centromere-associated network (CCAN) (also known as central kinetochore Sim4 complex in fission yeast), which is composed of at least cnl2, cnp3, cnp20, fta1, fta2, fta3, fta4, fta6, fta7, mal2, mhf1, mhf2, mis6, mis15, mis17, sim4 and wip1. Interacts with mis6 and dad1.

It is found in the nucleus. Its subcellular location is the chromosome. It localises to the centromere. Its function is as follows. Component of the kinetochore, a multiprotein complex that assembles on centromeric DNA and attaches chromosomes to spindle microtubules, mediating chromosome segregation and sister chromatid segregation during meiosis and mitosis. Component of the inner kinetochore constitutive centromere-associated network (CCAN), which serves as a structural platform for outer kinetochore assembly. This is Inner kinetochore subunit sim4 (sim4) from Schizosaccharomyces pombe (strain 972 / ATCC 24843) (Fission yeast).